A 312-amino-acid polypeptide reads, in one-letter code: Malate dehydrogenase (312 aa).

NAD(+)-binding positions include 7-13 (GAAGGIG) and aspartate 34. Positions 81 and 87 each coordinate substrate. Residues asparagine 94 and 117–119 (ITN) each bind NAD(+). The substrate site is built by asparagine 119 and arginine 153. The Proton acceptor role is filled by histidine 177. Methionine 227 contacts NAD(+).

It belongs to the LDH/MDH superfamily. MDH type 1 family. In terms of assembly, homodimer.

The enzyme catalyses (S)-malate + NAD(+) = oxaloacetate + NADH + H(+). Its function is as follows. Catalyzes the reversible oxidation of malate to oxaloacetate. The sequence is that of Malate dehydrogenase from Citrobacter koseri (strain ATCC BAA-895 / CDC 4225-83 / SGSC4696).